Consider the following 728-residue polypeptide: Hepatocyte growth factor (728 aa).

Positions 1 to 32 (MMWGTKLLPVLLLQHVLLHLLLLPVTIPYAEG) are cleaved as a signal peptide. Q33 carries the post-translational modification Pyrrolidone carboxylic acid. Positions 38–124 (NTLHEFKKSA…HEFDLYENKD (87 aa)) constitute a PAN domain. 8 disulfides stabilise this stretch: C71/C97, C75/C85, C129/C207, C150/C190, C178/C202, C212/C289, C233/C272, and C261/C284. Kringle domains lie at 129–207 (CIIG…IPQC) and 212–289 (CMTC…IKMC). N-linked (GlcNAc...) asparagine glycosylation occurs at N295. 11 disulfides stabilise this stretch: C306–C384, C327–C366, C355–C378, C392–C470, C413–C453, C441–C465, C488–C607, C520–C536, C615–C682, C645–C661, and C672–C700. 2 Kringle domains span residues 306–384 (CIKG…IPKC) and 392–470 (CYRG…ISRC). N-linked (GlcNAc...) asparagine glycosylation is present at N403. In terms of domain architecture, Peptidase S1 spans 496 to 724 (VVNGIPTQTT…YAKWIHKVIL (229 aa)). Residues N569 and N656 are each glycosylated (N-linked (GlcNAc...) asparagine).

The protein belongs to the peptidase S1 family. Plasminogen subfamily. Dimer of an alpha chain and a beta chain linked by a disulfide bond. Interacts with SRPX2; the interaction increases HGF mitogenic activity. The single-chain precursor undergoes proteolytic processing by TMPRSS13 resulting in an active two-chain form. The single-chain precursor undergoes proteolytic processing by HGFAC resulting in an active two-chain form.

Its function is as follows. Potent mitogen for mature parenchymal hepatocyte cells, seems to be a hepatotrophic factor, and acts as a growth factor for a broad spectrum of tissues and cell types. Activating ligand for the receptor tyrosine kinase MET by binding to it and promoting its dimerization. Activates MAPK signaling following TMPRSS13 cleavage and activation. This Rattus norvegicus (Rat) protein is Hepatocyte growth factor (Hgf).